Reading from the N-terminus, the 1018-residue chain is Antigenic heat-stable 120 kDa protein (1018 aa).

The segment covering 1–11 (MSKDGNLNTSE) has biased composition (polar residues). 3 disordered regions span residues 1-82 (MSKD…DPIT), 355-402 (GQSK…MPQS), and 995-1018 (RDSI…PPQR). Residues 19 to 34 (EYTEEQKQTLEQEQKE) show a composition bias toward basic and acidic residues. Low complexity predominate over residues 53 to 68 (TSASSAQSTPSTSALS). 4 stretches are compositionally biased toward polar residues: residues 69–80 (GNISPDSQTSDP), 355–380 (GQSK…QYKQ), 387–402 (PTNQ…MPQS), and 996–1007 (DSIQSENLNKST). A compositionally biased stretch (basic and acidic residues) spans 1009 to 1018 (IKRESSPPQR).

Its subcellular location is the cytoplasm. This Rickettsia japonica (strain ATCC VR-1363 / YH) protein is Antigenic heat-stable 120 kDa protein (sca4).